The sequence spans 348 residues: Histidinol-phosphate aminotransferase (348 aa).

An N6-(pyridoxal phosphate)lysine modification is found at lysine 210.

This sequence belongs to the class-II pyridoxal-phosphate-dependent aminotransferase family. Histidinol-phosphate aminotransferase subfamily. As to quaternary structure, homodimer. The cofactor is pyridoxal 5'-phosphate.

It carries out the reaction L-histidinol phosphate + 2-oxoglutarate = 3-(imidazol-4-yl)-2-oxopropyl phosphate + L-glutamate. It functions in the pathway amino-acid biosynthesis; L-histidine biosynthesis; L-histidine from 5-phospho-alpha-D-ribose 1-diphosphate: step 7/9. In Pseudomonas putida (strain ATCC 700007 / DSM 6899 / JCM 31910 / BCRC 17059 / LMG 24140 / F1), this protein is Histidinol-phosphate aminotransferase.